The sequence spans 379 residues: Subtilisin Carlsberg (379 aa).

An N-terminal signal peptide occupies residues 1–29 (MMRKKSFWLGMLTAFMLVFTMAFSDSASA). Residues 30–105 (AQPAKNVEKD…VEEDHVAHAL (76 aa)) constitute a propeptide that is removed on maturation. In terms of domain architecture, Inhibitor I9 spans 44 to 102 (FKSGVKTASVKKDIIKESGGKVDKQFRIINAAKAKLDKEALKEVKNDPDVAYVEEDHVA). A Ca(2+)-binding site is contributed by Q107. The Peptidase S8 domain occupies 110–378 (PYGIPLIKAD…KGLINVEAAA (269 aa)). Catalysis depends on D137, which acts as the Charge relay system. Residue D146 participates in Ca(2+) binding. The active-site Charge relay system is H168. L179, N181, T183, V185, A273, Y275, and V278 together coordinate Ca(2+). S325 serves as the catalytic Charge relay system.

The protein belongs to the peptidase S8 family. The cofactor is Ca(2+).

The protein localises to the secreted. The enzyme catalyses Hydrolysis of proteins with broad specificity for peptide bonds, and a preference for a large uncharged residue in P1. Hydrolyzes peptide amides.. With respect to regulation, inhibited by p-chlorophenyl and 1-naphthyl boronic acid derivatives. Subtilisin is an extracellular alkaline serine protease, it catalyzes the hydrolysis of proteins and peptide amides. Shows high specificity for aromatic and hydrophobic amino acids in the P1 substrate position. May play an important role in the degradation of feather keratin. The polypeptide is Subtilisin Carlsberg (Bacillus licheniformis).